We begin with the raw amino-acid sequence, 117 residues long: Photosystem II reaction center Psb28 protein (117 aa).

The protein belongs to the Psb28 family. Part of the photosystem II complex.

It localises to the cellular thylakoid membrane. This Prochlorococcus marinus (strain MIT 9301) protein is Photosystem II reaction center Psb28 protein.